The primary structure comprises 163 residues: UPF0416 protein RBE_1121 (163 aa).

This sequence belongs to the UPF0416 family.

This chain is UPF0416 protein RBE_1121, found in Rickettsia bellii (strain RML369-C).